Reading from the N-terminus, the 603-residue chain is Terpenoid synthase 22 (603 aa).

Mg(2+)-binding residues include Asp-356, Asp-360, Asn-500, and Glu-508. The DDXXD motif signature appears at 356 to 360 (DDTCD).

Belongs to the terpene synthase family. Tpsa subfamily. The cofactor is Mg(2+). Requires Mn(2+) as cofactor. Predominantly expressed in siliques but also in flowers.

Its subcellular location is the cytoplasm. It participates in secondary metabolite biosynthesis; terpenoid biosynthesis. In terms of biological role, involved in terpene biosynthesis in roots. Possesses sesquiterpene (C15) synthase activity in vitro. Does not seem to be involved in diterpene (C20) biosynthesis. This Arabidopsis thaliana (Mouse-ear cress) protein is Terpenoid synthase 22.